Reading from the N-terminus, the 90-residue chain is Cell division topological specificity factor (90 aa).

It belongs to the MinE family.

Its function is as follows. Prevents the cell division inhibition by proteins MinC and MinD at internal division sites while permitting inhibition at polar sites. This ensures cell division at the proper site by restricting the formation of a division septum at the midpoint of the long axis of the cell. This chain is Cell division topological specificity factor, found in Clostridium perfringens (strain SM101 / Type A).